Reading from the N-terminus, the 92-residue chain is RIIa domain-containing protein 1 (92 aa).

The RIIa domain occupies 43–77 (KEVEWLISGFFREIFLKRPDNILEFAADYFTDPRL).

The sequence is that of RIIa domain-containing protein 1 (RIIAD1) from Homo sapiens (Human).